A 51-amino-acid polypeptide reads, in one-letter code: Large ribosomal subunit protein eL39 (51 aa).

This sequence belongs to the eukaryotic ribosomal protein eL39 family. As to quaternary structure, interacts with impact.

The polypeptide is Large ribosomal subunit protein eL39 (rpl39) (Ictalurus punctatus (Channel catfish)).